A 694-amino-acid polypeptide reads, in one-letter code: Protein NPGR1 (694 aa).

Positions 12–40 (FEDQPGSPESLATRDFSASGLSSRNGGGD) are disordered. TPR repeat units lie at residues 32 to 65 (LSSR…SLNY), 66 to 101 (EEAR…TPRI), 135 to 168 (LEAI…VENA), 188 to 221 (QKAL…PWNL), 307 to 340 (GERW…SESR), 551 to 584 (TEAW…CYYS), 585 to 618 (PRGW…EPDH), 620 to 654 (PSIV…DPRN), and 655 to 688 (HDAW…ELSA).

Interacts with calmodulin in a calcium-dependent manner. In terms of tissue distribution, expressed in pollen, flowers, fruits and leaves.

The protein is Protein NPGR1 of Arabidopsis thaliana (Mouse-ear cress).